Consider the following 472-residue polypeptide: 3-isopropylmalate dehydratase large subunit (472 aa).

Cysteine 352, cysteine 413, and cysteine 416 together coordinate [4Fe-4S] cluster.

The protein belongs to the aconitase/IPM isomerase family. LeuC type 1 subfamily. Heterodimer of LeuC and LeuD. Requires [4Fe-4S] cluster as cofactor.

The enzyme catalyses (2R,3S)-3-isopropylmalate = (2S)-2-isopropylmalate. Its pathway is amino-acid biosynthesis; L-leucine biosynthesis; L-leucine from 3-methyl-2-oxobutanoate: step 2/4. Its function is as follows. Catalyzes the isomerization between 2-isopropylmalate and 3-isopropylmalate, via the formation of 2-isopropylmaleate. This Laribacter hongkongensis (strain HLHK9) protein is 3-isopropylmalate dehydratase large subunit.